We begin with the raw amino-acid sequence, 289 residues long: Nucleotide-binding protein LAF_0356 (289 aa).

Position 12–19 (12–19 (GMSGAGKT)) interacts with ATP. 62–65 (DSRS) contributes to the GTP binding site.

Belongs to the RapZ-like family.

Functionally, displays ATPase and GTPase activities. In Limosilactobacillus fermentum (strain NBRC 3956 / LMG 18251) (Lactobacillus fermentum), this protein is Nucleotide-binding protein LAF_0356.